The primary structure comprises 272 residues: Indole-3-glycerol phosphate synthase (272 aa).

It belongs to the TrpC family.

It carries out the reaction 1-(2-carboxyphenylamino)-1-deoxy-D-ribulose 5-phosphate + H(+) = (1S,2R)-1-C-(indol-3-yl)glycerol 3-phosphate + CO2 + H2O. It functions in the pathway amino-acid biosynthesis; L-tryptophan biosynthesis; L-tryptophan from chorismate: step 4/5. In Mycobacterium ulcerans (strain Agy99), this protein is Indole-3-glycerol phosphate synthase.